Consider the following 142-residue polypeptide: Large ribosomal subunit protein uL13 (142 aa).

This sequence belongs to the universal ribosomal protein uL13 family. Part of the 50S ribosomal subunit.

Functionally, this protein is one of the early assembly proteins of the 50S ribosomal subunit, although it is not seen to bind rRNA by itself. It is important during the early stages of 50S assembly. The sequence is that of Large ribosomal subunit protein uL13 from Pectobacterium carotovorum subsp. carotovorum (strain PC1).